The chain runs to 1006 residues: Transmembrane channel-like protein 5 (1006 aa).

Positions M1 to E289 are disordered. Over M1–K458 the chain is Extracellular. Composition is skewed to polar residues over residues S20–L30, T50–S59, and R76–H101. The span at A138–S149 shows a compositional bias: low complexity. Positions R239–H250 are enriched in basic and acidic residues. Residues F459–A479 traverse the membrane as a helical segment. The Cytoplasmic portion of the chain corresponds to K480–Q485. A helical transmembrane segment spans residues F486–Y508. At T509–Q525 the chain is on the extracellular side. Residues L526–S546 form a helical membrane-spanning segment. Residues M547–Y619 are Cytoplasmic-facing. The chain crosses the membrane as a helical span at residues M620–L640. At A641–P654 the chain is on the extracellular side. Residues G655 to Y675 form a helical membrane-spanning segment. Topologically, residues S676–N698 are cytoplasmic. A helical membrane pass occupies residues I699 to L719. The Extracellular portion of the chain corresponds to S720–D732. The chain crosses the membrane as a helical span at residues I733–F753. The Cytoplasmic segment spans residues L754–L786. The chain crosses the membrane as a helical span at residues V787–I807. Over M808 to F835 the chain is Extracellular. Residues F836–I856 form a helical membrane-spanning segment. Topologically, residues W857 to N900 are cytoplasmic. The chain crosses the membrane as a helical span at residues L901–L921. Residues Y922–A1006 lie on the Extracellular side of the membrane.

The protein belongs to the TMC family.

It localises to the membrane. In terms of biological role, probable component of an ion channel. Molecular function hasn't been characterized yet. This Homo sapiens (Human) protein is Transmembrane channel-like protein 5.